The sequence spans 109 residues: Transmembrane protein 233 (109 aa).

The tract at residues 1-30 (MSQYAPSPDFKRALDSSPEANTEDDKTEED) is disordered. Residues 1–41 (MSQYAPSPDFKRALDSSPEANTEDDKTEEDVPMPKNYLWLT) are Cytoplasmic-facing. The span at 21–30 (NTEDDKTEED) shows a compositional bias: acidic residues. An intramembrane region (helical) is located at residues 42 to 62 (IVSCFCPAYPINIVALVFSIM). The Cytoplasmic portion of the chain corresponds to 63–84 (SLNSYNDGDYEGARRLGRNAKW). The chain crosses the membrane as a helical span at residues 85–105 (VAIASIIIGLLIIGISCAVHF). The Extracellular portion of the chain corresponds to 106–109 (TRNA).

The protein belongs to the CD225/Dispanin family. As to quaternary structure, interacts with the giant stinging tree toxin ExTxA (AC P0DQP3). Interacts with Nav1.7/SCN9A. Interacts with Nav1.1/SCN1A, Nav1.2/SCN2A, Nav1.3/SCN3A, Nav1.4/SCN4A, Nav1.5/SCN5A, and Nav1.6/SCN8A.

Its subcellular location is the cell membrane. Its function is as follows. Probable accessory protein of voltage-gated sodium channels. This Homo sapiens (Human) protein is Transmembrane protein 233.